A 504-amino-acid polypeptide reads, in one-letter code: MXXXXGYLEFDGARQQSFLYPLFFREYIYVLAYDHGLNRLNRNRSIFFENVDYEKKYSSLIVKRLILRMYEQNRLIIPSKDLNQNHFFGHTSLFYYQMISVLFAVIVEIPFSLRLGSSFEGKQFKKSYNLQSIHSIFPFLEDKLSHFNYVLDVVIPYPIHLEILVQTLRYRVKDASSLHFFRFCLYEYCNWKDFSIKKKSILNPRFFLFLYNSHVCEYESIFFFLRKRSSHLRSTSYEVLFERILFYGKIQHFLKVFINSFPAILGLLKDPFIHYVRYHGRCILATKDTPLLMNKWKYYFVNLCQCYFSVWFQSQKVNINQLSKDNLEFLGYLSSLRLNPLVVRSQMLENSFLIDNVRIKLDSKIPISSIIGSLAKDKFCNVLGHPISKAVWTDSSDSDILNRFVRISRNISHYYSGSSNKKNLYRIKYILRLCCVKTLARKHKSTVRAFLKRLGSGLLEEFLTGEDQVLSLIFPRSYYASKRLYRVRIWYLDILYLNDLVNHE.

The protein belongs to the intron maturase 2 family. MatK subfamily.

It is found in the plastid. Its subcellular location is the chloroplast. Usually encoded in the trnK tRNA gene intron. Probably assists in splicing its own and other chloroplast group II introns. This chain is Maturase K, found in Rorippa amphibia (Great yellow-cress).